We begin with the raw amino-acid sequence, 268 residues long: Small ribosomal subunit protein uS2 (268 aa).

Positions 233–268 (SVREEEFAEAAAEGEEKPARRAPAKKAAKKGDDAQA) are disordered.

The protein belongs to the universal ribosomal protein uS2 family.

The polypeptide is Small ribosomal subunit protein uS2 (Stenotrophomonas maltophilia (strain K279a)).